Consider the following 75-residue polypeptide: MKLLVVAVIACIMLIGFADPASGCKDCSCVICGPGGEPCPGCSARVPVCKDLINIMEGLERQVRQCACGEQVWLF.

Positions 1–24 are cleaved as a signal peptide; sequence MKLLVVAVIACIMLIGFADPASGC.

The protein is Salivary glue protein Sgs-8 (Sgs8) of Drosophila melanogaster (Fruit fly).